The following is a 229-amino-acid chain: uncharacterized protein (229 aa).

This is an uncharacterized protein from Dictyostelium discoideum (Social amoeba).